Reading from the N-terminus, the 3241-residue chain is PHD finger protein rhinoceros (3241 aa).

Basic residues predominate over residues 1–16 (MSQRGKRGNQQHHQSH). Positions 1–126 (MSQRGKRGNQ…GASSSSSWQA (126 aa)) are disordered. Composition is skewed to low complexity over residues 42–55 (PPNG…AEVT) and 90–126 (RAAA…SWQA). A PHD-type 1 zinc finger spans residues 312 to 362 (NVICDVCRSPDSEEANEMVFCDNCNICVHQACYGITAIPSGQWLCRTCSMG). The C2HC pre-PHD-type zinc finger occupies 364-398 (KPDCVLCPNKGGAMKSNKSGKHWAHVSCALWIPEV). The PHD-type 2 zinc-finger motif lies at 422–481 (LICVLCRKRVGSCIQCSVKPCKTAYHVTCAFQHGLEMRAIIEEGNAEDGVKLRSYCQKHS). Disordered regions lie at residues 482 to 501 (MSKG…ASVA), 508 to 554 (NRYG…ARAQ), 737 to 1266 (SGKQ…VATP), 1279 to 1483 (PQRQ…STKV), 1500 to 1613 (PKTN…SETR), and 1632 to 1746 (NLGA…QHLL). The span at 540-554 (KTELTSEERNQARAQ) shows a compositional bias: basic and acidic residues. Polar residues predominate over residues 762 to 777 (KKLNNGILSSRTSSPE). Over residues 807–874 (KSSAAAATST…SGSSSAGSGV (68 aa)) the composition is skewed to low complexity. The segment covering 931 to 943 (ERCRNRQEPERGA) has biased composition (basic and acidic residues). The span at 949-965 (QSKSVPNRSQASRSKPT) shows a compositional bias: polar residues. The segment covering 995–1007 (DADESVSSDESEE) has biased composition (acidic residues). Residues 1019 to 1031 (STTTSGLATTGSA) are compositionally biased toward low complexity. The span at 1060–1075 (TVESNVSDSQNQQTIR) shows a compositional bias: polar residues. Over residues 1087–1104 (TAATTSSTSQAASSTSKA) the composition is skewed to low complexity. Polar residues-rich tracts occupy residues 1117 to 1126 (IGNSTKTKPN) and 1151 to 1163 (NMRS…TLQP). Positions 1184–1211 (KVKDSSSRVSNEADKSSLEKVRPKEHLQ) are enriched in basic and acidic residues. Over residues 1313 to 1327 (VTSATISGSGSSVPA) the composition is skewed to polar residues. Thr-1346 is modified (phosphothreonine). Phosphoserine is present on Ser-1352. At Thr-1364 the chain carries Phosphothreonine. A compositionally biased stretch (low complexity) spans 1382–1426 (SSSSSGDSESSSSSSSSGSSSSSGGSDSDSESQASNSENPSSREP). At Thr-1456 the chain carries Phosphothreonine. Polar residues predominate over residues 1463–1483 (NVLNIPSTRSRQNSTTKSTKV). A compositionally biased stretch (basic and acidic residues) spans 1541 to 1558 (SPEKTVSRCKSRAEESPK). A compositionally biased stretch (polar residues) spans 1576-1594 (KGTSSLDKLLNKKQQQMNH). Over residues 1599-1608 (TPPPISPTPP) the composition is skewed to pro residues. The span at 1664 to 1675 (TAPTRTQLSASA) shows a compositional bias: polar residues. Residues 1688–1699 (PAAPLPASPTPT) are compositionally biased toward pro residues. A compositionally biased stretch (basic residues) spans 1717 to 1731 (RRMRWRSRRRRRRRS). Coiled coils occupy residues 1741-1770 (HTQH…ASKY) and 1893-1925 (SEED…KEAV). Disordered stretches follow at residues 2037–2061 (LEKS…GQPA), 2124–2148 (AERR…PVVT), 2203–2227 (NNTN…TPNN), 2346–2454 (TPPV…GGVT), 2598–2629 (ATGT…PAPN), 2667–2691 (SEEV…ARSQ), 2768–2811 (NDDS…NSSS), 2832–2911 (GAGA…SVDE), 2964–3015 (NKRG…TTTM), 3042–3169 (KAET…EAAM), and 3184–3241 (VNVG…CEVR). Residues 2359 to 2381 (KRTSVSGSNLSKKQTHKSPQLPQ) show a composition bias toward polar residues. Over residues 2392–2402 (PLQPPTPPAPV) the composition is skewed to pro residues. Gly residues predominate over residues 2430–2439 (GSGGSGAPGR). Composition is skewed to polar residues over residues 2598–2611 (ATGT…QHSG) and 2673–2689 (DSDS…SDAR). The segment covering 2855–2865 (NNDNNGKTGAA) has biased composition (polar residues). Positions 2876–2887 (KTLESSEDDHQA) are enriched in basic and acidic residues. Residues Ser-2880 and Ser-2881 each carry the phosphoserine modification. Residues 2899–2911 (ANETPSGVSSVDE) are compositionally biased toward polar residues. A compositionally biased stretch (basic and acidic residues) spans 2964 to 2974 (NKRGVVVKDGE). Positions 2984 to 3002 (KRPKSSKPKKEKKEKKRQK) are enriched in basic residues. Residues 3003-3015 (QQQLILSSSTTTM) show a composition bias toward low complexity. Ser-3104 and Ser-3110 each carry phosphoserine. Composition is skewed to polar residues over residues 3115 to 3130 (LLNS…NTSP) and 3184 to 3197 (VNVG…NSLP). Residues 3198 to 3218 (SASGTGSASSNSCNSNSINNN) show a composition bias toward low complexity. The segment covering 3219 to 3230 (GSGGGRASGEGG) has biased composition (gly residues).

It belongs to the JADE family.

The protein localises to the nucleus. May function as a negative regulator of the EGFR/Ras/MAPK signaling pathway during eye development. The sequence is that of PHD finger protein rhinoceros (rno) from Drosophila melanogaster (Fruit fly).